A 126-amino-acid chain; its full sequence is Fluoride-specific ion channel FluC 1 (126 aa).

4 helical membrane-spanning segments follow: residues 5 to 25, 39 to 59, 69 to 89, and 100 to 120; these read FILA…LVGI, TLFI…LFAI, IFLI…SLDS, and AAGA…IAGI. Glycine 77 and threonine 80 together coordinate Na(+).

Belongs to the fluoride channel Fluc/FEX (TC 1.A.43) family.

It localises to the cell inner membrane. The catalysed reaction is fluoride(in) = fluoride(out). With respect to regulation, na(+) is not transported, but it plays an essential structural role and its presence is essential for fluoride channel function. Its function is as follows. Fluoride-specific ion channel. Important for reducing fluoride concentration in the cell, thus reducing its toxicity. This Nitrobacter hamburgensis (strain DSM 10229 / NCIMB 13809 / X14) protein is Fluoride-specific ion channel FluC 1.